A 140-amino-acid polypeptide reads, in one-letter code: Nucleoside diphosphate kinase (140 aa).

Lys11, Phe59, Arg87, Thr93, Arg104, and Asn114 together coordinate ATP. His117 functions as the Pros-phosphohistidine intermediate in the catalytic mechanism.

The protein belongs to the NDK family. Homotetramer. Mg(2+) is required as a cofactor.

It localises to the cytoplasm. It carries out the reaction a 2'-deoxyribonucleoside 5'-diphosphate + ATP = a 2'-deoxyribonucleoside 5'-triphosphate + ADP. The catalysed reaction is a ribonucleoside 5'-diphosphate + ATP = a ribonucleoside 5'-triphosphate + ADP. In terms of biological role, major role in the synthesis of nucleoside triphosphates other than ATP. The ATP gamma phosphate is transferred to the NDP beta phosphate via a ping-pong mechanism, using a phosphorylated active-site intermediate. This Rickettsia peacockii (strain Rustic) protein is Nucleoside diphosphate kinase.